The primary structure comprises 851 residues: Thrombospondin type-1 domain-containing protein 1 (851 aa).

The N-terminal stretch at 1–24 (MKPMLKDFSNLLLVVLCDYVLGEA) is a signal peptide. Residues 25–412 (EYLLLQEPVH…SPQDPVKSNN (388 aa)) lie on the Extracellular side of the membrane. Residues Asn53, Asn58, Asn69, Asn110, Asn135, and Asn304 are each glycosylated (N-linked (GlcNAc...) asparagine). Positions 339 to 392 (IETWGPWQPWSPCSTTCGDAVRERRRLCVTSFPSRPSCSGMSSETSPCSLEECA) constitute a TSP type-1 domain. 3 disulfide bridges follow: Cys351–Cys386, Cys355–Cys391, and Cys366–Cys376. The chain crosses the membrane as a helical span at residues 413 to 433 (VVTVTGISLCLFIIFATVLIT). Over 434–851 (LWRRFGRAPK…STLSVEKLVI (418 aa)) the chain is Cytoplasmic. At Ser462 the chain carries Phosphoserine. Disordered stretches follow at residues 471-516 (SEPR…ESFQ), 626-646 (KSQIRSTGGRDGSSERCHSRS), and 682-777 (SRMR…SSPI). Residues 685–695 (RTWDQMEDRCR) show a composition bias toward basic and acidic residues. Positions 765 to 776 (SHRSASRKQSSP) are enriched in polar residues.

As to quaternary structure, part of a complex composed of THSD1, PTK2/FAK1, TLN1 and VCL. Interacts with TLN1. Expressed in cerebral vascular endothelium.

It is found in the endosome membrane. It localises to the cell junction. The protein resides in the focal adhesion. Is a positive regulator of nascent focal adhesion assembly, involved in the modulation of endothelial cell attachment to the extracellular matrix. The protein is Thrombospondin type-1 domain-containing protein 1 (Thsd1) of Mus musculus (Mouse).